The sequence spans 657 residues: Zinc finger CCCH domain-containing protein 50 (657 aa).

ANK repeat units lie at residues 68 to 97 (EARTPLMVAATYGSAGVVSLLVGLGGCVDV) and 104 to 136 (DGATALHCAASGGSRNAVAVVKLLLAAGADPAT). The segment covering 176–206 (SVASGSSSPPLSSSPDEGNRSPSSRSSSLSP) has biased composition (low complexity). The segment at 176–222 (SVASGSSSPPLSSSPDEGNRSPSSRSSSLSPITVDRGKKEYPVDPTL) is disordered. C3H1-type zinc fingers lie at residues 274 to 302 (PYTAVPCPNFRRPGGCPSGDSCEFSHGVF) and 311 to 333 (YRTRLCKEGAACARRICFFAHDE). Residues 507–566 (YSPRALDPSSLAHSPFGGMSPRSPRTMEPTSPLSARVGAPATQRPSVGSPRNSSAWGTVG) are disordered. The span at 549-562 (QRPSVGSPRNSSAW) shows a compositional bias: polar residues.

The polypeptide is Zinc finger CCCH domain-containing protein 50 (Oryza sativa subsp. japonica (Rice)).